The sequence spans 161 residues: Phenolic acid decarboxylase PadC (161 aa).

Positions 11 and 13 each coordinate substrate. Y19 serves as the catalytic Proton donor. R41 lines the substrate pocket. Catalysis depends on E64, which acts as the Proton acceptor.

The protein belongs to the PadC family. In terms of assembly, homodimer.

It catalyses the reaction (E)-4-coumarate + H(+) = 4-vinylphenol + CO2. The catalysed reaction is (E)-cinnamate + H(+) = styrene + CO2. The enzyme catalyses (E)-ferulate + H(+) = 2-methoxy-4-vinylphenol + CO2. Functionally, involved in the decarboxylation and detoxification of phenolic derivatives. It is able to catalyze the decarboxylation of ferulic, p-coumaric and caffeic acids. This chain is Phenolic acid decarboxylase PadC (padC), found in Bacillus subtilis (strain 168).